A 480-amino-acid polypeptide reads, in one-letter code: Chromosomal replication initiator protein DnaA (480 aa).

The interval 1-73 (MNQDFWPFCL…GELGEEFHGQ (73 aa)) is domain I, interacts with DnaA modulators. Residues 73–143 (QPIQLELQLP…SANELAYDKT (71 aa)) form a domain II region. The tract at residues 144–360 (RLNADFTFDT…GALNKVVAYA (217 aa)) is domain III, AAA+ region. ATP-binding residues include Gly188, Gly190, Lys191, and Thr192. The segment at 361 to 480 (RFHGRGISLE…VHVLTQVLRG (120 aa)) is domain IV, binds dsDNA.

Belongs to the DnaA family. In terms of assembly, oligomerizes as a right-handed, spiral filament on DNA at oriC.

The protein localises to the cytoplasm. Functionally, plays an essential role in the initiation and regulation of chromosomal replication. ATP-DnaA binds to the origin of replication (oriC) to initiate formation of the DNA replication initiation complex once per cell cycle. Binds the DnaA box (a 9 base pair repeat at the origin) and separates the double-stranded (ds)DNA. Forms a right-handed helical filament on oriC DNA; dsDNA binds to the exterior of the filament while single-stranded (ss)DNA is stabiized in the filament's interior. The ATP-DnaA-oriC complex binds and stabilizes one strand of the AT-rich DNA unwinding element (DUE), permitting loading of DNA polymerase. After initiation quickly degrades to an ADP-DnaA complex that is not apt for DNA replication. Binds acidic phospholipids. This chain is Chromosomal replication initiator protein DnaA, found in Azoarcus sp. (strain BH72).